The primary structure comprises 1053 residues: Mgp-operon protein 3 (1053 aa).

An N-terminal signal peptide occupies residues 1 to 25 (MKTMRKQIYKKAYWLLLPFLPLALA). Disordered regions lie at residues 162–207 (SLAK…GFKL) and 224–261 (EPID…GGSS). The span at 164–175 (AKEKGKTQREVH) shows a compositional bias: basic and acidic residues. The span at 179–207 (GQANQWTSQRNQHDLNNNPSPNASTGFKL) shows a compositional bias: polar residues. A helical membrane pass occupies residues 946–966 (VGSSVGILFILLVLGLGIGIP). The disordered stretch occupies residues 1024–1053 (AAFLKPPVQPPSKPEGEQKAVEVKSEETKS). A compositionally biased stretch (basic and acidic residues) spans 1037-1053 (PEGEQKAVEVKSEETKS).

It localises to the cell membrane. This is Mgp-operon protein 3 from Mycoplasma genitalium (strain ATCC 33530 / DSM 19775 / NCTC 10195 / G37) (Mycoplasmoides genitalium).